We begin with the raw amino-acid sequence, 330 residues long: D-alanine--D-alanine ligase (330 aa).

The ATP-grasp domain occupies 121–321 (NHYLKDFGVK…IKDVMTDIIE (201 aa)). 149 to 204 (VTRLGLPIFVKPNDGGSSFGVTKVKEVSAIQPAIAKAFGEGREVILERFIDGTEVT) is a binding site for ATP. Mg(2+) is bound by residues Asp-275, Glu-288, and Asn-290.

It belongs to the D-alanine--D-alanine ligase family. Requires Mg(2+) as cofactor. The cofactor is Mn(2+).

Its subcellular location is the cytoplasm. The catalysed reaction is 2 D-alanine + ATP = D-alanyl-D-alanine + ADP + phosphate + H(+). It functions in the pathway cell wall biogenesis; peptidoglycan biosynthesis. Functionally, cell wall formation. This chain is D-alanine--D-alanine ligase, found in Parabacteroides distasonis (strain ATCC 8503 / DSM 20701 / CIP 104284 / JCM 5825 / NCTC 11152).